Consider the following 272-residue polypeptide: MASSTSLGNVGDTTALTPLLRGATTTTTVQLKQTDSNSQDQQKFQKYLNTAQALHQMGVIVPELSQGGWQSQTARHSSTRGLQSAGANRGASLAARTTTTVGVGRRDSTSTTLELPNVITQLYHTSTSQLAYLNGQIVVMGSNAVPSLWYWVVDERTTSGRATWWAKTHLNFGTEVQKNFVENQLGFKSEDNSNTSLTNFKSQGLTQPAYLISGLDVVADHLVFAAFKAGAVGYDMTTDSNASTYNQALTWSTTAGLDSDGGTTTWWRILRG.

It belongs to the MgpC family.

This chain is Putative MgpC-like protein MPN_102, found in Mycoplasma pneumoniae (strain ATCC 29342 / M129 / Subtype 1) (Mycoplasmoides pneumoniae).